The primary structure comprises 273 residues: Dermonecrotic toxin LspaSicTox-alphaIA2iv (273 aa).

Residue H5 is part of the active site. E25 and D27 together coordinate Mg(2+). H41 acts as the Nucleophile in catalysis. 2 disulfide bridges follow: C45–C51 and C47–C190. D85 provides a ligand contact to Mg(2+).

It belongs to the arthropod phospholipase D family. Class II subfamily. Mg(2+) is required as a cofactor. Expressed by the venom gland.

It localises to the secreted. The catalysed reaction is an N-(acyl)-sphingosylphosphocholine = an N-(acyl)-sphingosyl-1,3-cyclic phosphate + choline. It carries out the reaction an N-(acyl)-sphingosylphosphoethanolamine = an N-(acyl)-sphingosyl-1,3-cyclic phosphate + ethanolamine. It catalyses the reaction a 1-acyl-sn-glycero-3-phosphocholine = a 1-acyl-sn-glycero-2,3-cyclic phosphate + choline. The enzyme catalyses a 1-acyl-sn-glycero-3-phosphoethanolamine = a 1-acyl-sn-glycero-2,3-cyclic phosphate + ethanolamine. Its function is as follows. Dermonecrotic toxins cleave the phosphodiester linkage between the phosphate and headgroup of certain phospholipids (sphingolipid and lysolipid substrates), forming an alcohol (often choline) and a cyclic phosphate. This toxin acts on sphingomyelin (SM). It may also act on ceramide phosphoethanolamine (CPE), lysophosphatidylcholine (LPC) and lysophosphatidylethanolamine (LPE), but not on lysophosphatidylserine (LPS), and lysophosphatidylglycerol (LPG). It acts by transphosphatidylation, releasing exclusively cyclic phosphate products as second products. Induces dermonecrosis, hemolysis, increased vascular permeability, edema, inflammatory response, and platelet aggregation. This chain is Dermonecrotic toxin LspaSicTox-alphaIA2iv, found in Loxosceles spadicea (Recluse spider).